Consider the following 100-residue polypeptide: Aspartyl/glutamyl-tRNA(Asn/Gln) amidotransferase subunit C (100 aa).

It belongs to the GatC family. Heterotrimer of A, B and C subunits.

The enzyme catalyses L-glutamyl-tRNA(Gln) + L-glutamine + ATP + H2O = L-glutaminyl-tRNA(Gln) + L-glutamate + ADP + phosphate + H(+). The catalysed reaction is L-aspartyl-tRNA(Asn) + L-glutamine + ATP + H2O = L-asparaginyl-tRNA(Asn) + L-glutamate + ADP + phosphate + 2 H(+). In terms of biological role, allows the formation of correctly charged Asn-tRNA(Asn) or Gln-tRNA(Gln) through the transamidation of misacylated Asp-tRNA(Asn) or Glu-tRNA(Gln) in organisms which lack either or both of asparaginyl-tRNA or glutaminyl-tRNA synthetases. The reaction takes place in the presence of glutamine and ATP through an activated phospho-Asp-tRNA(Asn) or phospho-Glu-tRNA(Gln). This is Aspartyl/glutamyl-tRNA(Asn/Gln) amidotransferase subunit C from Rickettsia canadensis (strain McKiel).